Consider the following 308-residue polypeptide: Autophagy-related protein 3 (308 aa).

The flexible region stretch occupies residues 83–159; that stretch reads NFVETQTTET…NELADDDDDI (77 aa). A disordered region spans residues 89-121; that stretch reads TTETRDVGDGWELEGQSEGERESGREDTKSNEE. Residues 106-120 show a composition bias toward basic and acidic residues; that stretch reads EGERESGREDTKSNE. Catalysis depends on Cys-235, which acts as the Glycyl thioester intermediate. The interval 239-283 is handle region; that stretch reads NVMKVLMEKVRASRHRARDTEAQKNAEEDWEDLQSDIDDGLRVDQ.

The protein belongs to the ATG3 family. As to quaternary structure, monomer. Interacts with ATG8 through an intermediate thioester bond between Cys-235 and the C-terminal Gly of ATG8. Interacts with the C-terminal region of the E1-like ATG7 enzyme. Also interacts with the ATG12-ATG5 conjugate.

The protein localises to the cytoplasm. E2 conjugating enzyme required for the cytoplasm to vacuole transport (Cvt) and autophagy. Required for selective autophagic degradation of the nucleus (nucleophagy) as well as for mitophagy which contributes to regulate mitochondrial quantity and quality by eliminating the mitochondria to a basal level to fulfill cellular energy requirements and preventing excess ROS production. Responsible for the E2-like covalent binding of phosphatidylethanolamine to the C-terminal Gly of ATG8. The ATG12-ATG5 conjugate plays a role of an E3 and promotes the transfer of ATG8 from ATG3 to phosphatidylethanolamine (PE). This step is required for the membrane association of ATG8. The formation of the ATG8-phosphatidylethanolamine conjugate is essential for autophagy and for the cytoplasm to vacuole transport (Cvt). The ATG8-PE conjugate mediates tethering between adjacent membranes and stimulates membrane hemifusion, leading to expansion of the autophagosomal membrane during autophagy. The sequence is that of Autophagy-related protein 3 from Kluyveromyces marxianus (strain DMKU3-1042 / BCC 29191 / NBRC 104275) (Yeast).